The following is a 423-amino-acid chain: Ferrochelatase, mitochondrial (423 aa).

The transit peptide at 1–29 (MISRKIISTINSKTFYNKSLSYCTVNNNK) directs the protein to the mitochondrion. Cysteine 173 is a [2Fe-2S] cluster binding site. Active-site residues include histidine 207 and aspartate 380. Residues cysteine 401, cysteine 404, and cysteine 411 each contribute to the [2Fe-2S] cluster site.

The protein belongs to the ferrochelatase family. In terms of assembly, monomer. The cofactor is [2Fe-2S] cluster.

The protein localises to the mitochondrion inner membrane. It carries out the reaction heme b + 2 H(+) = protoporphyrin IX + Fe(2+). It participates in porphyrin-containing compound metabolism; protoheme biosynthesis; protoheme from protoporphyrin-IX: step 1/1. Catalyzes the ferrous insertion into protoporphyrin IX. This chain is Ferrochelatase, mitochondrial (hemH), found in Dictyostelium discoideum (Social amoeba).